Consider the following 493-residue polypeptide: Alpha-amylase-related protein (493 aa).

An N-terminal signal peptide occupies residues 1–19; it reads MFKFALTLTLCLAGSLSLA. At glutamine 20 the chain carries Pyrrolidone carboxylic acid. Cysteine 47 and cysteine 103 are joined by a disulfide. The Ca(2+) site is built by asparagine 117, glutamine 168, and aspartate 177. The cysteines at positions 156 and 170 are disulfide-linked. Arginine 205 is a chloride binding site. The active-site Nucleophile is aspartate 207. Histidine 211 serves as a coordination point for Ca(2+). The active-site Proton donor is glutamate 244. The chloride site is built by asparagine 307 and arginine 342. Intrachain disulfides connect cysteine 375–cysteine 381, cysteine 417–cysteine 440, and cysteine 447–cysteine 459.

The protein belongs to the glycosyl hydrolase 13 family. As to quaternary structure, monomer. Ca(2+) serves as cofactor. Requires chloride as cofactor. Midgut and fat body.

It is found in the secreted. The catalysed reaction is Endohydrolysis of (1-&gt;4)-alpha-D-glucosidic linkages in polysaccharides containing three or more (1-&gt;4)-alpha-linked D-glucose units.. This chain is Alpha-amylase-related protein (Amyrel), found in Drosophila melanogaster (Fruit fly).